Consider the following 130-residue polypeptide: Small ribosomal subunit protein uS9 (130 aa).

Residues 104–130 are disordered; that stretch reads LTRDPRMKERKKYGLKKARRAPQFSKR. Residues 111 to 130 are compositionally biased toward basic residues; it reads KERKKYGLKKARRAPQFSKR.

This sequence belongs to the universal ribosomal protein uS9 family.

The chain is Small ribosomal subunit protein uS9 from Ruminiclostridium cellulolyticum (strain ATCC 35319 / DSM 5812 / JCM 6584 / H10) (Clostridium cellulolyticum).